Reading from the N-terminus, the 296-residue chain is Acetylglutamate kinase (296 aa).

Substrate-binding positions include 69-70, arginine 91, and asparagine 193; that span reads GG.

This sequence belongs to the acetylglutamate kinase family. ArgB subfamily.

Its subcellular location is the cytoplasm. The enzyme catalyses N-acetyl-L-glutamate + ATP = N-acetyl-L-glutamyl 5-phosphate + ADP. It participates in amino-acid biosynthesis; L-arginine biosynthesis; N(2)-acetyl-L-ornithine from L-glutamate: step 2/4. Its function is as follows. Catalyzes the ATP-dependent phosphorylation of N-acetyl-L-glutamate. The protein is Acetylglutamate kinase of Paracidovorax citrulli (strain AAC00-1) (Acidovorax citrulli).